Reading from the N-terminus, the 1343-residue chain is Kinesin-like protein KIF7 (1343 aa).

The 335-residue stretch at P15 to I349 folds into the Kinesin motor domain. Position 94 to 101 (G94 to T101) interacts with ATP. Disordered stretches follow at residues N356–T382, R451–D483, and E611–L639. The tract at residues R358–G479 is interaction with DLG5. Residues R358–E1206 form an interaction with SMO region. Residues R480–R542 are a coiled coil. Residues A513 to Q775 are sufficient for interaction with NPHP1. 2 coiled-coil regions span residues A698–E1057 and T1109–L1211. A Phosphoserine modification is found at S898. Disordered stretches follow at residues H1219–N1238 and G1310–L1343.

Belongs to the TRAFAC class myosin-kinesin ATPase superfamily. Kinesin family. KIF27 subfamily. Can form homodimers and interacts with microtubules. Interacts with GLI1, GLI2, GLI3, SMO and SUFU. Interacts with NPHP1. Interacts with SMO and DLG5 (via PDZ4 or guanylate kinase-like domain). Polyubiquitinated by UBR3. As to expression, embryonic stem cells, melanotic melanoma and Jurkat T-cells. Expressed in heart, lung, liver, kidney, testis, retina, placenta, pancreas, colon, small intestin, prostate and thymus.

Its subcellular location is the cell projection. It localises to the cilium. The protein resides in the cytoplasm. The protein localises to the cytoskeleton. It is found in the cilium basal body. In terms of biological role, essential for hedgehog signaling regulation: acts both as a negative and positive regulator of sonic hedgehog (Shh) and Indian hedgehog (Ihh) pathways, acting downstream of SMO, through both SUFU-dependent and -independent mechanisms. Involved in the regulation of microtubular dynamics. Required for proper organization of the ciliary tip and control of ciliary localization of SUFU-GLI2 complexes. Required for localization of GLI3 to cilia in response to Shh. Negatively regulates Shh signaling by preventing inappropriate activation of the transcriptional activator GLI2 in the absence of ligand. Positively regulates Shh signaling by preventing the processing of the transcription factor GLI3 into its repressor form. In keratinocytes, promotes the dissociation of SUFU-GLI2 complexes, GLI2 nuclear translocation and Shh signaling activation. Involved in the regulation of epidermal differentiation and chondrocyte development. The chain is Kinesin-like protein KIF7 (KIF7) from Homo sapiens (Human).